Consider the following 170-residue polypeptide: Opacity-related protein POPM3 (170 aa).

It belongs to the opacity porin family.

The protein resides in the cell outer membrane. This Neisseria meningitidis serogroup C protein is Opacity-related protein POPM3 (opr).